The following is a 371-amino-acid chain: 4-hydroxy-3-methylbut-2-en-1-yl diphosphate synthase (flavodoxin) (371 aa).

4 residues coordinate [4Fe-4S] cluster: cysteine 272, cysteine 275, cysteine 307, and glutamate 314.

Belongs to the IspG family. [4Fe-4S] cluster serves as cofactor.

It catalyses the reaction (2E)-4-hydroxy-3-methylbut-2-enyl diphosphate + oxidized [flavodoxin] + H2O + 2 H(+) = 2-C-methyl-D-erythritol 2,4-cyclic diphosphate + reduced [flavodoxin]. It functions in the pathway isoprenoid biosynthesis; isopentenyl diphosphate biosynthesis via DXP pathway; isopentenyl diphosphate from 1-deoxy-D-xylulose 5-phosphate: step 5/6. Its function is as follows. Converts 2C-methyl-D-erythritol 2,4-cyclodiphosphate (ME-2,4cPP) into 1-hydroxy-2-methyl-2-(E)-butenyl 4-diphosphate. This chain is 4-hydroxy-3-methylbut-2-en-1-yl diphosphate synthase (flavodoxin), found in Magnetococcus marinus (strain ATCC BAA-1437 / JCM 17883 / MC-1).